The primary structure comprises 286 residues: MELIIMSGRSGSGKSVALRALEDLGYYCVDNIPLALIPQLTDYLEKLKRSVVVSLDVRNLPEDPDVLEQVLHAFPSHISKTLIFLDCQRKALVRRYSDSRRLHPLSTHDLSLENVIDLENHLLEPLFQHADYIIDTTYFSSHELAEKLRELLNGSSEKELNIIVESFGFKYGIPADADYVFDVRFLPNPHWNLELRPMTGLEKPVIDFLENQSEVHQFISHTCNYLEVWLPLLEQNNRSYLTIAIGCTGGKHRSVFVAEKLARYIESKGKKVRVRHCSLEKHYKTS.

8 to 15 (GRSGSGKS) contributes to the ATP binding site. Residue 56–59 (DVRN) coordinates GTP.

This sequence belongs to the RapZ-like family.

In terms of biological role, displays ATPase and GTPase activities. In Glaesserella parasuis serovar 5 (strain SH0165) (Haemophilus parasuis), this protein is Nucleotide-binding protein HAPS_0087.